Consider the following 324-residue polypeptide: DNA-directed RNA polymerase subunit alpha (324 aa).

The alpha N-terminal domain (alpha-NTD) stretch occupies residues 1 to 228 (MIEIQKPTIR…EHFNLFTDLS (228 aa)). The alpha C-terminal domain (alpha-CTD) stretch occupies residues 245–324 (RNKLLDMTIE…STPKGEEEEK (80 aa)).

It belongs to the RNA polymerase alpha chain family. In terms of assembly, homodimer. The RNAP catalytic core consists of 2 alpha, 1 beta, 1 beta' and 1 omega subunit. When a sigma factor is associated with the core the holoenzyme is formed, which can initiate transcription.

It catalyses the reaction RNA(n) + a ribonucleoside 5'-triphosphate = RNA(n+1) + diphosphate. Its function is as follows. DNA-dependent RNA polymerase catalyzes the transcription of DNA into RNA using the four ribonucleoside triphosphates as substrates. In Caldicellulosiruptor saccharolyticus (strain ATCC 43494 / DSM 8903 / Tp8T 6331), this protein is DNA-directed RNA polymerase subunit alpha.